Reading from the N-terminus, the 1786-residue chain is uncharacterized protein (1786 aa).

3 disordered regions span residues 140 to 191 (QGLR…LPEA), 203 to 329 (RRES…RGGV), and 400 to 480 (GGSD…TPPE). Over residues 149–158 (SDMNSQTSLT) the composition is skewed to polar residues. The segment covering 232-247 (GHAPEAPAPGESPASS) has biased composition (low complexity). Residues 248–259 (QCLPSQACENDF) are compositionally biased toward polar residues. Residues 306-329 (TSCRQHREEAGDRAGAGEDKRGGV) show a composition bias toward basic and acidic residues. Over residues 422 to 438 (STTPSTNTTRTPSPISS) the composition is skewed to low complexity. Residues 467-480 (VPPPTGPGTATPPE) are compositionally biased toward pro residues. Position 721 is a phosphothreonine (Thr-721). Disordered regions lie at residues 746 to 907 (SESK…SDGH), 1081 to 1180 (VRDV…NSSP), 1218 to 1242 (ASAQRTPEKPKEEEAKEEGKAPKPA), 1291 to 1348 (KEGV…VSAR), 1362 to 1460 (SLYI…NSDC), and 1477 to 1550 (LLGR…EHTP). Basic and acidic residues-rich tracts occupy residues 810-828 (MQREHEFKMERGEVTDTSH) and 845-861 (KPWERGLQRQSSRHSEA). Residues 1105–1115 (KGSGDSSDKGS) show a composition bias toward low complexity. Residues 1131–1140 (TPASGGSRSL) show a composition bias toward polar residues. The segment covering 1153–1164 (PREEGVDREPRE) has biased composition (basic and acidic residues). The span at 1167 to 1180 (SQVSNGGRLLNSSP) shows a compositional bias: polar residues. Phosphoserine is present on Ser-1179. 2 stretches are compositionally biased toward basic and acidic residues: residues 1223–1238 (TPEKPKEEEAKEEGKA) and 1301–1319 (DPDKLAKQLGQVEERDTGH). Polar residues-rich tracts occupy residues 1336 to 1345 (RNSNPSTESV), 1389 to 1401 (NVFTVSSSSTQKT), and 1504 to 1521 (ARSQVPSNPKGSQVSGTS). Omega-N-methylarginine is present on Arg-1767.

This is an uncharacterized protein from Mus musculus (Mouse).